The chain runs to 208 residues: Uracil phosphoribosyltransferase (208 aa).

Residues R78, R103, and 130–138 (DPMFATGGT) contribute to the 5-phospho-alpha-D-ribose 1-diphosphate site. Residues I193 and 198–200 (GDA) each bind uracil. Residue D199 participates in 5-phospho-alpha-D-ribose 1-diphosphate binding.

The protein belongs to the UPRTase family. It depends on Mg(2+) as a cofactor.

It catalyses the reaction UMP + diphosphate = 5-phospho-alpha-D-ribose 1-diphosphate + uracil. Its pathway is pyrimidine metabolism; UMP biosynthesis via salvage pathway; UMP from uracil: step 1/1. With respect to regulation, allosterically activated by GTP. Its function is as follows. Catalyzes the conversion of uracil and 5-phospho-alpha-D-ribose 1-diphosphate (PRPP) to UMP and diphosphate. The polypeptide is Uracil phosphoribosyltransferase (Campylobacter concisus (strain 13826)).